Consider the following 186-residue polypeptide: Potassium-transporting ATPase KdpC subunit (186 aa).

The helical transmembrane segment at 9-29 threads the bilayer; it reads AAVVLFGGCLLVLGLLYPLAM.

The protein belongs to the KdpC family. In terms of assembly, the system is composed of three essential subunits: KdpA, KdpB and KdpC.

The protein resides in the cell membrane. Part of the high-affinity ATP-driven potassium transport (or Kdp) system, which catalyzes the hydrolysis of ATP coupled with the electrogenic transport of potassium into the cytoplasm. This subunit acts as a catalytic chaperone that increases the ATP-binding affinity of the ATP-hydrolyzing subunit KdpB by the formation of a transient KdpB/KdpC/ATP ternary complex. The sequence is that of Potassium-transporting ATPase KdpC subunit from Methanosphaerula palustris (strain ATCC BAA-1556 / DSM 19958 / E1-9c).